We begin with the raw amino-acid sequence, 421 residues long: Gamma-glutamyl phosphate reductase (421 aa).

The protein belongs to the gamma-glutamyl phosphate reductase family.

Its subcellular location is the cytoplasm. The enzyme catalyses L-glutamate 5-semialdehyde + phosphate + NADP(+) = L-glutamyl 5-phosphate + NADPH + H(+). Its pathway is amino-acid biosynthesis; L-proline biosynthesis; L-glutamate 5-semialdehyde from L-glutamate: step 2/2. Functionally, catalyzes the NADPH-dependent reduction of L-glutamate 5-phosphate into L-glutamate 5-semialdehyde and phosphate. The product spontaneously undergoes cyclization to form 1-pyrroline-5-carboxylate. In Pseudomonas fluorescens (strain ATCC BAA-477 / NRRL B-23932 / Pf-5), this protein is Gamma-glutamyl phosphate reductase.